The sequence spans 114 residues: T cell receptor alpha variable 12-3 (114 aa).

The first 21 residues, 1–21 (MMKSLRVLLVILWLQLSWVWS), serve as a signal peptide directing secretion. An Ig-like domain is found at 24–114 (KEVEQDPGPL…DSATYLCAMS (91 aa)). A glycan (N-linked (GlcNAc...) asparagine) is linked at asparagine 44. Cysteine 45 and cysteine 111 are oxidised to a cystine.

In terms of assembly, alpha-beta TR is a heterodimer composed of an alpha and beta chain; disulfide-linked. The alpha-beta TR is associated with the transmembrane signaling CD3 coreceptor proteins to form the TR-CD3 (TcR or TCR). The assembly of alpha-beta TR heterodimers with CD3 occurs in the endoplasmic reticulum where a single alpha-beta TR heterodimer associates with one CD3D-CD3E heterodimer, one CD3G-CD3E heterodimer and one CD247 homodimer forming a stable octameric structure. CD3D-CD3E and CD3G-CD3E heterodimers preferentially associate with TR alpha and TR beta chains, respectively. The association of the CD247 homodimer is the last step of TcR assembly in the endoplasmic reticulum and is required for transport to the cell surface.

It localises to the cell membrane. In terms of biological role, v region of the variable domain of T cell receptor (TR) alpha chain that participates in the antigen recognition. Alpha-beta T cell receptors are antigen specific receptors which are essential to the immune response and are present on the cell surface of T lymphocytes. Recognize peptide-major histocompatibility (MH) (pMH) complexes that are displayed by antigen presenting cells (APC), a prerequisite for efficient T cell adaptive immunity against pathogens. Binding of alpha-beta TR to pMH complex initiates TR-CD3 clustering on the cell surface and intracellular activation of LCK that phosphorylates the ITAM motifs of CD3G, CD3D, CD3E and CD247 enabling the recruitment of ZAP70. In turn ZAP70 phosphorylates LAT, which recruits numerous signaling molecules to form the LAT signalosome. The LAT signalosome propagates signal branching to three major signaling pathways, the calcium, the mitogen-activated protein kinase (MAPK) kinase and the nuclear factor NF-kappa-B (NF-kB) pathways, leading to the mobilization of transcription factors that are critical for gene expression and essential for T cell growth and differentiation. The T cell repertoire is generated in the thymus, by V-(D)-J rearrangement. This repertoire is then shaped by intrathymic selection events to generate a peripheral T cell pool of self-MH restricted, non-autoaggressive T cells. Post-thymic interaction of alpha-beta TR with the pMH complexes shapes TR structural and functional avidity. The protein is T cell receptor alpha variable 12-3 of Homo sapiens (Human).